A 325-amino-acid chain; its full sequence is Urease accessory protein UreD (325 aa).

This sequence belongs to the UreD family. In terms of assembly, ureD, UreF and UreG form a complex that acts as a GTP-hydrolysis-dependent molecular chaperone, activating the urease apoprotein by helping to assemble the nickel containing metallocenter of UreC. The UreE protein probably delivers the nickel.

The protein localises to the cytoplasm. Functionally, required for maturation of urease via the functional incorporation of the urease nickel metallocenter. Expression of the urease operon increases the likelihood of bacterial survival by contributing to acid resistance in vitro and in vivo in BALB/c mice. Y.enterocolitica enters the body via an oral path and must survive the acidic stomach before being able to colonize the intestinal mucosa. In Yersinia enterocolitica, this protein is Urease accessory protein UreD.